The chain runs to 129 residues: MKRRTAREKALQSLFQIDVSDIEPNEAMQHALDGQESDAFFEQLVYGVLENKEKIDEMIKRHLVNWKLDRLANVDRAILRLSAYEMIFLDDIPVNVSMNEAIELAKQFGDDKSAKFVNGVLSNIKSDLE.

It belongs to the NusB family.

Functionally, involved in transcription antitermination. Required for transcription of ribosomal RNA (rRNA) genes. Binds specifically to the boxA antiterminator sequence of the ribosomal RNA (rrn) operons. This chain is Transcription antitermination protein NusB, found in Bacillus licheniformis (strain ATCC 14580 / DSM 13 / JCM 2505 / CCUG 7422 / NBRC 12200 / NCIMB 9375 / NCTC 10341 / NRRL NRS-1264 / Gibson 46).